Reading from the N-terminus, the 343-residue chain is MSKIFVDACFGKETPYTPVWMMRQAGRYLPEYMRVRAEAGNFLNLCHDPKKACEVTLQPVDIVGVDAAILFSDILVVPLEMGMDLKFVTGEGPKFDDPIKNEADLDRLFGGDEAASKLTYVYDTIKLIKEQLAEDKALIGFTGAPWTLATYMIEGEGTKTYNICKKMMYSNPKLLHKILSKVTEVVKFYMEKQIEAGIDVVQIFDSWAAAIEPSKYDEFSWKYMVEIADYLKAKYPHIPIIMFPKGIPAFLDKVYGNFEVFGVDWSTPMDLAKEKLGERYVLQGNMEPCRLYSKEETTESVESIQKIMGGKRHIFNLGHGILPDVPVENAKHFIKECHRVSKK.

Residues 23-27 (RQAGR), D73, Y151, S206, and H319 each bind substrate.

The protein belongs to the uroporphyrinogen decarboxylase family. In terms of assembly, homodimer.

The protein resides in the cytoplasm. The enzyme catalyses uroporphyrinogen III + 4 H(+) = coproporphyrinogen III + 4 CO2. The protein operates within porphyrin-containing compound metabolism; protoporphyrin-IX biosynthesis; coproporphyrinogen-III from 5-aminolevulinate: step 4/4. In terms of biological role, catalyzes the decarboxylation of four acetate groups of uroporphyrinogen-III to yield coproporphyrinogen-III. This is Uroporphyrinogen decarboxylase from Sulfurimonas denitrificans (strain ATCC 33889 / DSM 1251) (Thiomicrospira denitrificans (strain ATCC 33889 / DSM 1251)).